We begin with the raw amino-acid sequence, 111 residues long: Protein RnfH (111 aa).

A disordered region spans residues 88 to 111 (RRRRVQKTRESGTREGQKWLRGGA). Basic and acidic residues predominate over residues 94–105 (KTRESGTREGQK).

This sequence belongs to the UPF0125 (RnfH) family.

This chain is Protein RnfH, found in Cupriavidus pinatubonensis (strain JMP 134 / LMG 1197) (Cupriavidus necator (strain JMP 134)).